Reading from the N-terminus, the 376-residue chain is Heme chaperone HemW (376 aa).

One can recognise a Radical SAM core domain in the interval 1–236; it reads MFKLPPISLY…LKQSGYKKYE (236 aa). An S-adenosyl-L-methionine-binding site is contributed by Y10. [4Fe-4S] cluster contacts are provided by C16, C20, and C23. S-adenosyl-L-methionine is bound by residues G66, 67–68, E99, Q126, R138, and D162; that span reads GT.

The protein belongs to the anaerobic coproporphyrinogen-III oxidase family. HemW subfamily. It depends on [4Fe-4S] cluster as a cofactor.

The protein localises to the cytoplasm. Its function is as follows. Probably acts as a heme chaperone, transferring heme to an unknown acceptor. Binds one molecule of heme per monomer, possibly covalently. Binds 1 [4Fe-4S] cluster. The cluster is coordinated with 3 cysteines and an exchangeable S-adenosyl-L-methionine. The sequence is that of Heme chaperone HemW from Buchnera aphidicola subsp. Schizaphis graminum (strain Sg).